We begin with the raw amino-acid sequence, 219 residues long: Small ribosomal subunit protein uS3 (219 aa).

Residues Ile-38–Lys-106 enclose the KH type-2 domain.

The protein belongs to the universal ribosomal protein uS3 family. Part of the 30S ribosomal subunit. Forms a tight complex with proteins S10 and S14.

Its function is as follows. Binds the lower part of the 30S subunit head. Binds mRNA in the 70S ribosome, positioning it for translation. The polypeptide is Small ribosomal subunit protein uS3 (Bacillus cytotoxicus (strain DSM 22905 / CIP 110041 / 391-98 / NVH 391-98)).